Here is a 366-residue protein sequence, read N- to C-terminus: G kinase-anchoring protein 1 (366 aa).

Residues 1-95 (MASAVLSSVL…SHSVCNVQHE (95 aa)) are interaction with IRS1. The segment at 20 to 105 (QVDSGSGSDS…LSLPNPVQKE (86 aa)) is disordered. A phosphoserine mark is found at S23, S25, and S27. Over residues 39 to 50 (NGKSQTLGNKST) the composition is skewed to polar residues. Residues 46–77 (GNKSTANEKKREKRRKKKEQQQSEANELRNLA) adopt a coiled-coil conformation. S106 carries the post-translational modification Phosphoserine; by PKG. Coiled-coil stretches lie at residues 129–160 (DLEK…QTKV), 250–299 (LKDG…MLQE), and 326–353 (VSSL…YQGG).

The protein belongs to the GKAP1 family. As to quaternary structure, interacts with PRKG1 and IRS1.

It is found in the golgi apparatus. Regulates insulin-dependent IRS1 tyrosine phosphorylation in adipocytes by modulating the availability of IRS1 to IR tyrosine kinase. Its association with IRS1 is required for insulin-induced translocation of SLC2A4 to the cell membrane. Involved in TNF-induced impairment of insulin-dependent IRS1 tyrosine phosphorylation. This Rattus norvegicus (Rat) protein is G kinase-anchoring protein 1 (Gkap1).